Reading from the N-terminus, the 639-residue chain is Chaperone protein DnaK (639 aa).

At threonine 198 the chain carries Phosphothreonine; by autocatalysis. Positions 605–624 (SQAQGGAETNAGKQANAAAD) are disordered.

The protein belongs to the heat shock protein 70 family.

Functionally, acts as a chaperone. In Shewanella putrefaciens (strain CN-32 / ATCC BAA-453), this protein is Chaperone protein DnaK.